Reading from the N-terminus, the 2193-residue chain is Genome polyprotein (2193 aa).

The disordered stretch occupies residues 1-22; that stretch reads MGSQVSTQRSGSHENSNSATEG. A lipid anchor (N-myristoyl glycine; by host) is attached at G2. Topologically, residues 2–1503 are cytoplasmic; that stretch reads GSQVSTQRSG…HLNRAVLVMQ (1502 aa). Residues 568–588 form an amphipathic alpha-helix region; that stretch reads RVADVIESSIGDSVSRALTQA. Active-site for protease 2A activity residues include H883 and D901. C918 and C920 together coordinate Zn(2+). The active-site For protease 2A activity is the C972. Zn(2+) contacts are provided by C978 and H980. One can recognise an SF3 helicase domain in the interval 1216–1374; sequence EKRMNNYMQF…SKTDLGRLDA (159 aa). Position 1240 to 1247 (1240 to 1247) interacts with ATP; it reads GSPGTGKS. Zn(2+)-binding residues include C1381, C1392, and C1397. The C4-type; degenerate zinc-finger motif lies at 1381-1397; that stretch reads CSENNTANFKRCSPLVC. The stretch at 1504-1519 is an intramembrane region; that stretch reads SIATVVAVVSLVYVIY. The Cytoplasmic segment spans residues 1520-2193; sequence KLFAGFQGAY…NLRRNWLELF (674 aa). Y1529 bears the O-(5'-phospho-RNA)-tyrosine mark. In terms of domain architecture, Peptidase C3 spans 1549–1727; sequence GPSLDFALSL…FCAGLKRSYF (179 aa). Residues H1588, E1619, and C1695 each act as for protease 3C activity in the active site. In terms of domain architecture, RdRp catalytic spans 1958–2073; sequence GSLFAFDYSG…ASYPFPIDCL (116 aa). Residues D1964 and D2060 each coordinate Mg(2+).

It belongs to the picornaviruses polyprotein family. Interacts with capsid protein VP1 and capsid protein VP3 to form heterotrimeric protomers. In terms of assembly, interacts with capsid protein VP0, and capsid protein VP3 to form heterotrimeric protomers. Five protomers subsequently associate to form pentamers which serve as building blocks for the capsid. Interacts with capsid protein VP2, capsid protein VP3 and capsid protein VP4 following cleavage of capsid protein VP0. Interacts with host SCARB2. Interacts with host ARF6; this interaction mediates viral endocytosis. As to quaternary structure, interacts with capsid protein VP1 and capsid protein VP3 in the mature capsid. Interacts with host SCARB2. Interacts with capsid protein VP0 and capsid protein VP1 to form heterotrimeric protomers. Five protomers subsequently associate to form pentamers which serve as building blocks for the capsid. Interacts with capsid protein VP4 in the mature capsid. Interacts with protein 2C; this interaction may be important for virion morphogenesis. In terms of assembly, interacts with capsid protein VP1 and capsid protein VP3. As to quaternary structure, homodimer. Interacts with host BAX; this interaction activates the mitochondrial apoptotic pathway. Interacts with host ILF2. In terms of assembly, homohexamer; forms a hexameric ring structure with 6-fold symmetry characteristic of AAA+ ATPases. Interacts (via N-terminus) with host RTN3 (via reticulon domain); this interaction is important for viral replication. Interacts with capsid protein VP3; this interaction may be important for virion morphogenesis. As to quaternary structure, interacts with protein 3CD. Homodimer. Interacts with host GBF1. Interacts (via GOLD domain) with host ACBD3 (via GOLD domain); this interaction allows the formation of a viral protein 3A/ACBD3 heterotetramer with a 2:2 stoichiometry, which will stimulate the recruitment of host PI4KB in order to synthesize PI4P at the viral RNA replication sites. In terms of assembly, interacts with RNA-directed RNA polymerase. As to quaternary structure, interacts with host IFIH1/MDA5; this interaction inhibits host IFIH1. Interacts with protein 3AB and with RNA-directed RNA polymerase. In terms of assembly, interacts with Viral protein genome-linked and with protein 3CD. It depends on Mg(2+) as a cofactor. Post-translationally, specific enzymatic cleavages in vivo by the viral proteases yield processing intermediates and the mature proteins. Myristoylation is required for the formation of pentamers during virus assembly. Further assembly of 12 pentamers and a molecule of genomic RNA generates the provirion. In terms of processing, during virion maturation, immature virions are rendered infectious following cleavage of VP0 into VP4 and VP2. This maturation seems to be an autocatalytic event triggered by the presence of RNA in the capsid and it is followed by a conformational change infectious virion. Post-translationally, myristoylation is required during RNA encapsidation and formation of the mature virus particle. VPg is uridylylated by the polymerase into VPg-pUpU. This acts as a nucleotide-peptide primer for the genomic RNA replication.

It is found in the virion. It localises to the host cytoplasm. The protein localises to the host cytoplasmic vesicle membrane. The protein resides in the host nucleus. The catalysed reaction is a ribonucleoside 5'-triphosphate + H2O = a ribonucleoside 5'-diphosphate + phosphate + H(+). The enzyme catalyses Selective cleavage of Tyr-|-Gly bond in the picornavirus polyprotein.. It carries out the reaction RNA(n) + a ribonucleoside 5'-triphosphate = RNA(n+1) + diphosphate. It catalyses the reaction Selective cleavage of Gln-|-Gly bond in the poliovirus polyprotein. In other picornavirus reactions Glu may be substituted for Gln, and Ser or Thr for Gly.. With respect to regulation, replication or transcription is subject to high level of random mutations by the nucleotide analog ribavirin. In terms of biological role, forms an icosahedral capsid of pseudo T=3 symmetry with capsid proteins VP2 and VP3. The capsid is 300 Angstroms in diameter, composed of 60 copies of each capsid protein and enclosing the viral positive strand RNA genome. Capsid protein VP1 mainly forms the vertices of the capsid. Capsid protein VP1, together with VP2, interacts with host cell receptor SCARB2 to provide virion attachment to target host cells. This attachment induces virion internalization. After binding to its receptor, the capsid undergoes conformational changes. Capsid protein VP1 N-terminus (that contains an amphipathic alpha-helix) and capsid protein VP4 are externalized. Together, they shape a pore in the host membrane through which viral genome is translocated to host cell cytoplasm. Its function is as follows. Forms an icosahedral capsid of pseudo T=3 symmetry with capsid proteins VP2 and VP3. The capsid is 300 Angstroms in diameter, composed of 60 copies of each capsid protein and enclosing the viral positive strand RNA genome. Capsid protein VP2, together with VP1, interacts with host cell receptor SCARB2 to provide virion attachment to target host cells. Functionally, forms an icosahedral capsid of pseudo T=3 symmetry with capsid proteins VP2 and VP3. The capsid is 300 Angstroms in diameter, composed of 60 copies of each capsid protein and enclosing the viral positive strand RNA genome. Lies on the inner surface of the capsid shell. After binding to the host receptor, the capsid undergoes conformational changes. Capsid protein VP4 is released, Capsid protein VP1 N-terminus is externalized, and together, they shape a pore in the host membrane through which the viral genome is translocated into the host cell cytoplasm. In terms of biological role, component of immature procapsids, which is cleaved into capsid proteins VP4 and VP2 after maturation. Allows the capsid to remain inactive before the maturation step. Its function is as follows. Cysteine protease that cleaves viral polyprotein and specific host proteins. It is responsible for the autocatalytic cleavage between the P1 and P2 regions, which is the first cleavage occurring in the polyprotein. Also cleaves the host translation initiation factor EIF4G1, in order to shut down the capped cellular mRNA translation. Inhibits the host nucleus-cytoplasm protein and RNA trafficking by cleaving host members of the nuclear pores. Counteracts stress granule formation probably by antagonizing its assembly or promoting its dissassembly. Cleaves and inhibits host IFIH1/MDA5, thereby inhibiting the type-I IFN production and the establishment of the antiviral state. Cleaves and inhibits host MAVS, thereby inhibiting the type-I IFN production and the establishment of the antiviral state. Functionally, plays an essential role in the virus replication cycle by acting as a viroporin. Creates a pore in the host endoplasmic reticulum and as a consequence releases Ca2+ in the cytoplasm of infected cell. In turn, high levels of cytoplasmic calcium may trigger membrane trafficking and transport of viral ER-associated proteins to viroplasms, sites of viral genome replication. Induces and associates with structural rearrangements of intracellular membranes. Displays RNA-binding, nucleotide binding and NTPase activities. May play a role in virion morphogenesis and viral RNA encapsidation by interacting with the capsid protein VP3. In terms of biological role, localizes the viral replication complex to the surface of membranous vesicles. Together with protein 3CD binds the Cis-Active RNA Element (CRE) which is involved in RNA synthesis initiation. Acts as a cofactor to stimulate the activity of 3D polymerase, maybe through a nucleid acid chaperone activity. Its function is as follows. Localizes the viral replication complex to the surface of membranous vesicles. It inhibits host cell endoplasmic reticulum-to-Golgi apparatus transport and causes the disassembly of the Golgi complex, possibly through GBF1 interaction. This would result in depletion of MHC, trail receptors and IFN receptors at the host cell surface. Plays an essential role in viral RNA replication by recruiting ACBD3 and PI4KB at the viral replication sites, thereby allowing the formation of the rearranged membranous structures where viral replication takes place. Functionally, acts as a primer for viral RNA replication and remains covalently bound to viral genomic RNA. VPg is uridylylated prior to priming replication into VPg-pUpU. The oriI viral genomic sequence may act as a template for this. The VPg-pUpU is then used as primer on the genomic RNA poly(A) by the RNA-dependent RNA polymerase to replicate the viral genome. During genome replication, the VPg-RNA linkage is removed by the host TDP2, thereby accelerating replication. During the late stage of the replication cycle, host TDP2 is excluded from sites of viral RNA synthesis and encapsidation, allowing for the generation of progeny virions. Involved in the viral replication complex and viral polypeptide maturation. It exhibits protease activity with a specificity and catalytic efficiency that is different from protease 3C. Protein 3CD lacks polymerase activity. Protein 3CD binds to the 5'UTR of the viral genome. In terms of biological role, major viral protease that mediates proteolytic processing of the polyprotein. Cleaves host EIF5B, contributing to host translation shutoff. Also cleaves host PABPC1, contributing to host translation shutoff. Disassembles host cytoplasmic stress granules by cleaving host G3BP1, although this effect is less prononced than the inhibition induced by protease 2A. Cleaves host RIGI and thus contributes to the inhibition of type I interferon production. Cleaves host IRF7 and thus contributes to the inhibition of type I interferon production. Cleaves host HNRNPA1 thereby increasing the translation of apoptosis protease activating factor APAF1, leading to apoptosis of the host cell. Cleaves host NLRP1, triggers host N-glycine-mediated degradation of the autoinhibitory NLRP1 N-terminal fragment. Its function is as follows. Replicates the viral genomic RNA on the surface of intracellular membranes. May form linear arrays of subunits that propagate along a strong head-to-tail interaction called interface-I. Covalently attaches UMP to a tyrosine of VPg, which is used to prime RNA synthesis. The positive stranded RNA genome is first replicated at virus induced membranous vesicles, creating a dsRNA genomic replication form. This dsRNA is then used as template to synthesize positive stranded RNA genomes. ss(+)RNA genomes are either translated, replicated or encapsidated. The polypeptide is Genome polyprotein (Human enterovirus 71 (strain 7423/MS/87) (EV71)).